A 183-amino-acid chain; its full sequence is Holliday junction branch migration complex subunit RuvA (183 aa).

A domain I region spans residues 1 to 63 (MIVGLIGVVE…EDANLLYGFL (63 aa)). Residues 64–139 (EESEKILFER…FFIQDENRPA (76 aa)) are domain II. Position 139 (A139) is a region of interest, flexible linker. The interval 139-183 (ARNEVFLALESLGFKSAEINKVLKTLKPNLSIEAAIKEALQQLRS) is domain III.

Belongs to the RuvA family. As to quaternary structure, homotetramer. Forms an RuvA(8)-RuvB(12)-Holliday junction (HJ) complex. HJ DNA is sandwiched between 2 RuvA tetramers; dsDNA enters through RuvA and exits via RuvB. An RuvB hexamer assembles on each DNA strand where it exits the tetramer. Each RuvB hexamer is contacted by two RuvA subunits (via domain III) on 2 adjacent RuvB subunits; this complex drives branch migration. In the full resolvosome a probable DNA-RuvA(4)-RuvB(12)-RuvC(2) complex forms which resolves the HJ.

Its subcellular location is the cytoplasm. In terms of biological role, the RuvA-RuvB-RuvC complex processes Holliday junction (HJ) DNA during genetic recombination and DNA repair, while the RuvA-RuvB complex plays an important role in the rescue of blocked DNA replication forks via replication fork reversal (RFR). RuvA specifically binds to HJ cruciform DNA, conferring on it an open structure. The RuvB hexamer acts as an ATP-dependent pump, pulling dsDNA into and through the RuvAB complex. HJ branch migration allows RuvC to scan DNA until it finds its consensus sequence, where it cleaves and resolves the cruciform DNA. The sequence is that of Holliday junction branch migration complex subunit RuvA from Helicobacter pylori (strain HPAG1).